The sequence spans 330 residues: Aspartate--ammonia ligase (330 aa).

This sequence belongs to the class-II aminoacyl-tRNA synthetase family. AsnA subfamily.

It localises to the cytoplasm. The catalysed reaction is L-aspartate + NH4(+) + ATP = L-asparagine + AMP + diphosphate + H(+). Its pathway is amino-acid biosynthesis; L-asparagine biosynthesis; L-asparagine from L-aspartate (ammonia route): step 1/1. This Klebsiella pneumoniae (strain 342) protein is Aspartate--ammonia ligase.